The chain runs to 69 residues: DNA gyrase inhibitor YacG (69 aa).

Positions 13, 16, 32, and 36 each coordinate Zn(2+).

It belongs to the DNA gyrase inhibitor YacG family. In terms of assembly, interacts with GyrB. Zn(2+) serves as cofactor.

In terms of biological role, inhibits all the catalytic activities of DNA gyrase by preventing its interaction with DNA. Acts by binding directly to the C-terminal domain of GyrB, which probably disrupts DNA binding by the gyrase. The sequence is that of DNA gyrase inhibitor YacG from Neisseria meningitidis serogroup C / serotype 2a (strain ATCC 700532 / DSM 15464 / FAM18).